Here is a 130-residue protein sequence, read N- to C-terminus: Acidic phospholipase A2 daboiatoxin B chain (130 aa).

Positions 1–8 (MCLIGVEG) are cleaved as a signal peptide. 7 cysteine pairs are disulfide-bonded: C34/C123, C36/C52, C51/C103, C57/C130, C58/C96, C65/C89, and C83/C94. Ca(2+)-binding residues include Y35, G37, and G39. H55 is a catalytic residue. Residue D56 participates in Ca(2+) binding. The active site involves D97.

It belongs to the phospholipase A2 family. Group II subfamily. D49 sub-subfamily. As to quaternary structure, heterodimer of an acidic protein having phospholipase A2 activity (B chain) and an A chain which weakly inhibits the B chain enzymatic activity but potentiates its lethal potency. It depends on Ca(2+) as a cofactor. As to expression, expressed by the venom gland.

It is found in the secreted. The catalysed reaction is a 1,2-diacyl-sn-glycero-3-phosphocholine + H2O = a 1-acyl-sn-glycero-3-phosphocholine + a fatty acid + H(+). Its function is as follows. Monomer: Snake venom phospholipase A2 (PLA2) that shows a high PLA2 activity (2110 umol/min/mg). Functionally, heterodimer (A and B chains): snake venom phospholipase A2 that shows a moderate PLA2 activity (1377 umol/min/mg). Acts as a presynaptic neurotoxin. In vivo, induces edema and produces neurotoxic symptoms in mice. It exhibits indirect hemolysis and a strong myonecrotic activity and is cytotoxic. PLA2 catalyzes the calcium-dependent hydrolysis of the 2-acyl groups in 3-sn-phosphoglycerides. In Daboia siamensis (Eastern Russel's viper), this protein is Acidic phospholipase A2 daboiatoxin B chain.